The chain runs to 331 residues: NADH-quinone oxidoreductase subunit H (331 aa).

Transmembrane regions (helical) follow at residues 7–27 (ALVTIILTVVKAIVVLLAVVI), 81–101 (MIFTLAPVIAMGALLVAFAIV), 114–134 (IGILFFFAMAGLTVYAVLFAG), 154–174 (ISYEVFLALSLMGIVAQVGSF), 187–207 (VWFIIPQFFGFCTFIIAGVAV), 238–258 (FFVGEYIGIVLVSALLATLFF), 271–291 (WLSFFYFAAKTGFFIMLFILI), and 310–330 (VCLPLTLINLLVTGALVLAAA).

Belongs to the complex I subunit 1 family. In terms of assembly, NDH-1 is composed of 13 different subunits. Subunits NuoA, H, J, K, L, M, N constitute the membrane sector of the complex.

The protein localises to the cell inner membrane. The catalysed reaction is a quinone + NADH + 5 H(+)(in) = a quinol + NAD(+) + 4 H(+)(out). In terms of biological role, NDH-1 shuttles electrons from NADH, via FMN and iron-sulfur (Fe-S) centers, to quinones in the respiratory chain. The immediate electron acceptor for the enzyme in this species is believed to be ubiquinone. Couples the redox reaction to proton translocation (for every two electrons transferred, four hydrogen ions are translocated across the cytoplasmic membrane), and thus conserves the redox energy in a proton gradient. This subunit may bind ubiquinone. The sequence is that of NADH-quinone oxidoreductase subunit H from Pseudomonas paraeruginosa (strain DSM 24068 / PA7) (Pseudomonas aeruginosa (strain PA7)).